A 57-amino-acid polypeptide reads, in one-letter code: Small ribosomal subunit protein eS31 (57 aa).

Residues Cys29, Cys32, Cys47, and Cys50 each contribute to the Zn(2+) site. The C4-type zinc finger occupies 29–50 (CSRCGKGTYMSEHKDRNTCGKC).

Belongs to the eukaryotic ribosomal protein eS31 family. In terms of assembly, part of the 30S ribosomal subunit. Zn(2+) serves as cofactor.

The protein is Small ribosomal subunit protein eS31 of Nitrosopumilus maritimus (strain SCM1).